The chain runs to 940 residues: Lon protease homolog 1, mitochondrial (940 aa).

Residues 1 to 61 (MLKLFTSSAS…AFFCSEPTNG (61 aa)) constitute a mitochondrion transit peptide. The interval 70-90 (KAVESDSEVSDSKSSSAIVPT) is disordered. S74 is modified (phosphoserine). In terms of domain architecture, Lon N-terminal spans 100–309 (VLALPVPHRP…LTLELMKKEM (210 aa)). Position 464-471 (464-471 (GPPGVGKT)) interacts with ATP. Residues 751–935 (QTPVGVVMGL…GKIFELAFGY (185 aa)) form the Lon proteolytic domain. Active-site residues include S841 and K884.

Belongs to the peptidase S16 family. As to quaternary structure, homohexamer or homoheptamer. Organized in a ring with a central cavity.

Its subcellular location is the mitochondrion matrix. The enzyme catalyses Hydrolysis of proteins in presence of ATP.. ATP-dependent serine protease that mediates the selective degradation of misfolded, unassembled or oxidatively damaged polypeptides as well as certain short-lived regulatory proteins in the mitochondrial matrix. May also have a chaperone function in the assembly of inner membrane protein complexes. Participates in the regulation of mitochondrial gene expression and in the maintenance of the integrity of the mitochondrial genome. Binds to mitochondrial DNA in a site-specific manner. This is Lon protease homolog 1, mitochondrial (LON1) from Arabidopsis thaliana (Mouse-ear cress).